A 180-amino-acid polypeptide reads, in one-letter code: Der GTPase-activating protein YihI (180 aa).

Disordered stretches follow at residues 1–87 and 142–180; these read MSRK…MTKQ and GLLEPEEEEDFTASSAKGSRNDDDLLADFDDINFDDYKG. Over residues 23 to 32 the composition is skewed to basic and acidic residues; sequence NRTESDVEGR. Residues 33 to 43 show a composition bias toward basic residues; the sequence is LRKRAKKRKGL. A compositionally biased stretch (basic and acidic residues) spans 51–68; that stretch reads EVNEQKKQSSEQNRDPRL. A compositionally biased stretch (acidic residues) spans 165–180; it reads DLLADFDDINFDDYKG.

The protein belongs to the YihI family. In terms of assembly, interacts with Der.

A GTPase-activating protein (GAP) that modifies Der/EngA GTPase function. May play a role in ribosome biogenesis. The polypeptide is Der GTPase-activating protein YihI (Vibrio parahaemolyticus serotype O3:K6 (strain RIMD 2210633)).